A 186-amino-acid chain; its full sequence is Photosystem I assembly protein Ycf4 (186 aa).

A run of 2 helical transmembrane segments spans residues 22–42 (FCWACILFLGSLGFLVVGTSS) and 57–77 (IIFFPQGIVMSFYGIAGLFIS).

It belongs to the Ycf4 family.

It localises to the plastid. It is found in the chloroplast thylakoid membrane. Functionally, seems to be required for the assembly of the photosystem I complex. This is Photosystem I assembly protein Ycf4 from Dioscorea elephantipes (Elephant's foot yam).